A 418-amino-acid chain; its full sequence is Phospho-N-acetylmuramoyl-pentapeptide-transferase (418 aa).

10 consecutive transmembrane segments (helical) span residues 22–42 (YISF…VLIG), 72–92 (TPTM…LLLA), 95–115 (SNIY…LGLI), 135–155 (IIAQ…SPNI), 208–228 (AATW…VSNG), 244–264 (AIIG…GFAA), 277–297 (LTVF…HNAF), 302–322 (FMGD…AIII), 326–346 (LLLP…MIQV), and 395–415 (KIVV…VVTL).

The protein belongs to the glycosyltransferase 4 family. MraY subfamily. Mg(2+) is required as a cofactor.

It localises to the cell inner membrane. The catalysed reaction is UDP-N-acetyl-alpha-D-muramoyl-L-alanyl-gamma-D-glutamyl-meso-2,6-diaminopimeloyl-D-alanyl-D-alanine + di-trans,octa-cis-undecaprenyl phosphate = di-trans,octa-cis-undecaprenyl diphospho-N-acetyl-alpha-D-muramoyl-L-alanyl-D-glutamyl-meso-2,6-diaminopimeloyl-D-alanyl-D-alanine + UMP. It participates in cell wall biogenesis; peptidoglycan biosynthesis. In terms of biological role, catalyzes the initial step of the lipid cycle reactions in the biosynthesis of the cell wall peptidoglycan: transfers peptidoglycan precursor phospho-MurNAc-pentapeptide from UDP-MurNAc-pentapeptide onto the lipid carrier undecaprenyl phosphate, yielding undecaprenyl-pyrophosphoryl-MurNAc-pentapeptide, known as lipid I. The sequence is that of Phospho-N-acetylmuramoyl-pentapeptide-transferase from Azobacteroides pseudotrichonymphae genomovar. CFP2.